A 277-amino-acid chain; its full sequence is Diaminopimelate epimerase (277 aa).

The substrate site is built by Asn11 and Asn65. Cys74 (proton donor) is an active-site residue. Residues 75 to 76 (GN), Asn180, and 198 to 199 (ER) each bind substrate. The active-site Proton acceptor is the Cys208. Substrate is bound at residue 209–210 (GT).

It belongs to the diaminopimelate epimerase family. Homodimer.

The protein resides in the cytoplasm. The catalysed reaction is (2S,6S)-2,6-diaminopimelate = meso-2,6-diaminopimelate. Its pathway is amino-acid biosynthesis; L-lysine biosynthesis via DAP pathway; DL-2,6-diaminopimelate from LL-2,6-diaminopimelate: step 1/1. In terms of biological role, catalyzes the stereoinversion of LL-2,6-diaminopimelate (L,L-DAP) to meso-diaminopimelate (meso-DAP), a precursor of L-lysine and an essential component of the bacterial peptidoglycan. The sequence is that of Diaminopimelate epimerase from Gemmatimonas aurantiaca (strain DSM 14586 / JCM 11422 / NBRC 100505 / T-27).